The following is a 171-amino-acid chain: Odorant-binding protein 1b (171 aa).

A signal peptide spans 1–19 (MMVKFLLLALVFGLAHVHA). Cystine bridges form between cysteine 57-cysteine 61 and cysteine 76-cysteine 169.

This sequence belongs to the calycin superfamily. Lipocalin family. As to quaternary structure, may form a heterodimer with OBP1A. In terms of processing, the N-terminus may be blocked. As to expression, expressed in nasal mucosa (at protein level). Specifically detected in septal and lateral nasal glands.

The protein resides in the secreted. In terms of biological role, binds the chemical odorant 2-isobutyl-3-methoxypyrazine. This Mus musculus (Mouse) protein is Odorant-binding protein 1b.